The following is a 262-amino-acid chain: Ornithine carbamoyltransferase (262 aa).

Carbamoyl phosphate-binding positions include 3 to 7 (STRTR), Gln-30, Arg-54, and 81 to 84 (HPTQ). L-ornithine contacts are provided by residues Asn-114, Asp-178, and 182–183 (SM). Carbamoyl phosphate contacts are provided by residues 219–222 (HCLP) and Thr-247.

The protein belongs to the aspartate/ornithine carbamoyltransferase superfamily. OTCase family.

The protein localises to the cytoplasm. It catalyses the reaction carbamoyl phosphate + L-ornithine = L-citrulline + phosphate + H(+). Its pathway is amino-acid biosynthesis; L-arginine biosynthesis; L-arginine from L-ornithine and carbamoyl phosphate: step 1/3. The polypeptide is Ornithine carbamoyltransferase (argF) (Neisseria cinerea).